The following is a 334-amino-acid chain: NADH dehydrogenase (ubiquinone) complex I, assembly factor 6 homolog (334 aa).

The N-terminal 11 residues, 1–11 (MRRLVRNWNCR), are a transit peptide targeting the mitochondrion.

This sequence belongs to the NDUFAF6 family. Associates with mitochondrial complex I assembly intermediates during its biogenesis. Forms a complex including sicily, ND-42 and Hsp83; the complex is necessary to chaperone ND-42 in the cytoplasm before mitochondrial import; the interaction between sicily and ND-42 is direct and occurs preferably between the unprocessed forms in the cytoplasm; the interaction with Hsp83 is direct. Interacts with ND-30; interaction is stronger between the unprocessed forms in the cytoplasm. In terms of tissue distribution, expressed in the ventral nerve cord, larval brain, motor neuron axons, imaginal disks, and muscles (at protein level).

It localises to the mitochondrion inner membrane. The protein resides in the cytoplasm. The protein localises to the cytosol. Its function is as follows. Involved in the assembly of mitochondrial NADH:ubiquinone oxidoreductase complex (Complex I) at early stages. Interacts with cytosolic Hsp90 to chaperone the Complex I subunit ND-42 in the cytoplasm. The sequence is that of NADH dehydrogenase (ubiquinone) complex I, assembly factor 6 homolog from Drosophila melanogaster (Fruit fly).